The chain runs to 317 residues: Insulin-like growth factor-binding protein 2 (317 aa).

The first 33 residues, 1–33, serve as a signal peptide directing secretion; that stretch reads MQPRLGGPALLLLPPLLLLLLLGAGGGDCGARA. The 92-residue stretch at 35–126 folds into the IGFBP N-terminal domain; it reads VLFRCPPCTP…VHGEGTCEKH (92 aa). Cystine bridges form between cysteine 39-cysteine 76, cysteine 42-cysteine 78, cysteine 50-cysteine 79, cysteine 68-cysteine 82, cysteine 90-cysteine 103, and cysteine 97-cysteine 123. 2 disordered regions span residues 126-146 and 190-218; these read HGDAEYSASPEQVADNGEEHS and QHRQMGKGGKHHLGLEEPKKLRPPPARTP. The Thyroglobulin type-1 domain occupies 216 to 298; the sequence is RTPCQQELDQ…APTIRGDPEC (83 aa). 3 disulfides stabilise this stretch: cysteine 219-cysteine 253, cysteine 264-cysteine 275, and cysteine 277-cysteine 298. A Cell attachment site motif is present at residues 293–295; sequence RGD.

In terms of assembly, interacts with IGF1. Interacts with IGF2. Interacts (via RGD motif) with integrin alpha5/ITGA5; this interaction induces cell migration, adhesion or apoptosis according to the context. Interacts with PTPRB; this interaction leads to PTPRB dimerization and inactivation. In terms of processing, cleaved by MMP9 leading to release of free IGF2 from IGFBP2-IGF2 complex, which contributes to enhance the motility and the growth of astrocytes. O-glycosylated.

It is found in the secreted. Functionally, multifunctional protein that plays a critical role in regulating the availability of IGFs such as IGF1 and IGF2 to their receptors and thereby regulates IGF-mediated cellular processes including proliferation, differentiation, and apoptosis in a cell-type specific manner. Functions coordinately with receptor protein tyrosine phosphatase beta/PTPRB and the IGF1 receptor to regulate IGF1-mediated signaling by stimulating the phosphorylation of PTEN leading to its inactivation and AKT1 activation. Plays a positive role in cell migration via interaction with integrin alpha5/ITGA5 through an RGD motif. Additionally, interaction with ITGA5/ITGB1 enhances the adhesion of endothelial progenitor cells to endothelial cells. Upon mitochondrial damage, facilitates apoptosis with ITGA5 of podocytes, and then activates the phosphorylation of focal adhesion kinase (FAK)-mediated mitochondrial injury. This Bos taurus (Bovine) protein is Insulin-like growth factor-binding protein 2 (IGFBP2).